The primary structure comprises 101 residues: Urease subunit gamma (101 aa).

This sequence belongs to the urease gamma subunit family. In terms of assembly, heterotrimer of UreA (gamma), UreB (beta) and UreC (alpha) subunits. Three heterotrimers associate to form the active enzyme.

It is found in the cytoplasm. The enzyme catalyses urea + 2 H2O + H(+) = hydrogencarbonate + 2 NH4(+). It functions in the pathway nitrogen metabolism; urea degradation; CO(2) and NH(3) from urea (urease route): step 1/1. The polypeptide is Urease subunit gamma (Ureaplasma urealyticum serovar 10 (strain ATCC 33699 / Western)).